Here is a 323-residue protein sequence, read N- to C-terminus: Beta-ketoacyl-[acyl-carrier-protein] synthase III (323 aa).

Active-site residues include cysteine 113 and histidine 250. The ACP-binding stretch occupies residues 251–255; the sequence is QANRR. The active site involves asparagine 280.

The protein belongs to the thiolase-like superfamily. FabH family. In terms of assembly, homodimer.

It is found in the cytoplasm. The enzyme catalyses malonyl-[ACP] + acetyl-CoA + H(+) = 3-oxobutanoyl-[ACP] + CO2 + CoA. Its pathway is lipid metabolism; fatty acid biosynthesis. In terms of biological role, catalyzes the condensation reaction of fatty acid synthesis by the addition to an acyl acceptor of two carbons from malonyl-ACP. Catalyzes the first condensation reaction which initiates fatty acid synthesis and may therefore play a role in governing the total rate of fatty acid production. Possesses both acetoacetyl-ACP synthase and acetyl transacylase activities. Its substrate specificity determines the biosynthesis of branched-chain and/or straight-chain of fatty acids. The sequence is that of Beta-ketoacyl-[acyl-carrier-protein] synthase III from Allorhizobium ampelinum (strain ATCC BAA-846 / DSM 112012 / S4) (Agrobacterium vitis (strain S4)).